Consider the following 553-residue polypeptide: Capsid protein VP1 (553 aa).

The protein belongs to the microviridae F protein family.

The protein localises to the virion. Its subcellular location is the host cytoplasm. In terms of biological role, assembles to form an icosahedral capsid with a T=1 symmetry. The chain is Capsid protein VP1 from Spiroplasma virus 4 (SpV4).